Here is a 1845-residue protein sequence, read N- to C-terminus: MEPAERAGGRDPLEPGGRPGPDPQGFVPQKEIVYNKLLPYAERLDAESDLQLAQIKSNLGRAVQLQELWPGGLFWTRKLSTYHRLYGRKFSKEDHVLFIKLLYELVSIPKLEISMMQGFARLLINLLKKKELLSRDDLELPWRPLYDMVERILYSKTEHLGLNWFPNSVENVLKTLVKSCRPYFPADATAEMLEEWRPLMCPFDVTMQKAITYFEIFLPTSLPPELHHKGFKLWFDELIGLWVSVQNLPQWEGQLVNLFARLATDNIGYIDWDPYVPKVFTRILRSLNLPVGSSQVLVPRFLTNAYDIGHAVVWITAMMGGPSKLVQKHLAGLFNSITSFYHPSNNGRWLNKLMKLLQRLPNSVVRRLHRERYKKPSWLTPVPDSHKLTDQDVTDFVQCIIQPVLLAMFSKTGSLEAAQALQNLALMRPELVIPPVLERTYPALETLTEPHQLTATLSCVIGVARSLVSGGRWFPEGPTHMLPLLMRALPGVDPNDFSKCMITFQFIATFSTLVPLVDCSSVLQERNDLTEVERELCSATAEFEDFVLQFMDRCFGLIESSTLEQTREETETEKMTHLESLVELGLSSTFSTILTQCSKEIFMVALQKVFNFSISHIFETRVAGRMVADMCRAAVKCCPEESLKLFVPHCCGVITQLTMNDDVLNEEELDKELLWNLQLLSEITRVDGKKLLLYREQLVKILQRTLHLTCKQGYTLSCNLLHHLLRSTTLIYPTEYCSVPGGFDKPPSEYFPIKDWGKPGDLWNLGIQWHVPSSEEVAFAFYLLDSFLQPELIKLQRCGDGELEMSRDDVLQSLTIVHNCLIGSGNLLPPLKGEPVTNLVPSMVSLEETKLYTGLEYEIDLSRENYRETIARVIRKLLNHILNNSEDDTKSLFLIIKIIGDLLQFQGSHKHEFDSRWKSFNLVKKSMENRLHGKKQHIRALLIDRVMLQHELRTLTVEGCEYKKIHQEMIRDLLRLSTSSYSQVRNKAQQTFFAALGAYNFCCRDIIPLVLGFLRPDRQDVTQQQFKGALYCLLGNHSGVCLANLHDWDCIVQTWPAIVSSGLSQAMSLEKPSIVRLFDDLAEKIHRQYETIGLDFTVSKSCVGIAELLQQSKNPSINQTMLSSEEIKEGLKRQQGRNVDALRNYENLVNTLLDGVEQRNLPWKFEHIGIGLLSLLLRDDRVLPLRAIRFFVENLNHDAIVVRKMAISAVAGILKQLKRTHKKLTISPYEISGYPKPTQIVAGDRPDNHWLHYDSKSIPRTKKEWESSCFVEKTHWGYYTWPQNMVVYAGVEEQPKLGRSREDLTEAEQIIFDHFSDPKFVEQLITFLSLEDRKGKDKFNPRRFCLFKGIFRNFDDAFLPVLKPHLERLVADSHESTQRCVAEIIAGLIRGSKHWTFEKVEKLWELLCPLLRTALSNITVETYNDWGTCIATSCESRDPRKLHWLFELLLESPLSGEGGSFVDACRLYVLQGGLAQQEWRVPELLHRLLKYLEPKLTQVYKNVRERIGSVLTYIFMIDVSLPNTAPTASPRVPEFTARILEKLKPLMDVDEEIQNHVMEENGIGEEDERTQGIKLLKTILKWLMASAGRSFSTAVAEQLQLLPLFFKIAPVENDNSYDELKRDAKLCLSLMSQGLLYPHQVPLVLQVLNQTARSSSWHARYTVLTYLQTMVFYNLFIFLNNEDAVKDIRWLVISLLEDEQLEVREMAATTLSGLLQCNFLTMDSPMQIHFEQLCKTKLPKKRKRDPGFVGDTIPSAELVKRHAGVLGLGACVLSSPYDVPTWMPQLLMNLSAHLNDPQPIEMTVKKTLSNFRRTHHDNWQEHKQQFTDDQLLVLTDLLVSPCYYA.

Positions 1–13 (MEPAERAGGRDPL) are enriched in basic and acidic residues. The interval 1–26 (MEPAERAGGRDPLEPGGRPGPDPQGF) is disordered. HEAT repeat units follow at residues 475–519 (PEGP…LVDC) and 1000–1039 (NFCC…NHSG). A Phosphoserine modification is found at S1123. HEAT repeat units lie at residues 1181–1219 (RVLP…QLKR) and 1356–1394 (DAFL…GSKH). Residue S1616 is modified to Phosphoserine. HEAT repeat units lie at residues 1638 to 1676 (PHQV…YNLF) and 1682 to 1720 (EDAV…CNFL). Residues 1652 to 1740 (ARSSSWHARY…EQLCKTKLPK (89 aa)) are bromodomain-like (BRDL).

This sequence belongs to the BLM10 family. In terms of assembly, homodimer. Component of the spermatoproteasome, a form of the proteasome specifically found in testis. Interacts with the 20S and 26S proteasomes. Post-translationally, phosphorylated.

The protein localises to the cytoplasm. It localises to the cytosol. The protein resides in the nucleus. Its subcellular location is the nucleus speckle. Its function is as follows. Associated component of the proteasome that specifically recognizes acetylated histones and promotes ATP- and ubiquitin-independent degradation of core histones during spermatogenesis and DNA damage response. Recognizes and binds acetylated histones via its bromodomain-like (BRDL) region and activates the proteasome by opening the gated channel for substrate entry. Binds to the core proteasome via its C-terminus, which occupies the same binding sites as the proteasomal ATPases, opening the closed structure of the proteasome via an active gating mechanism. Component of the spermatoproteasome, a form of the proteasome specifically found in testis: binds to acetylated histones and promotes degradation of histones, thereby participating actively to the exchange of histones during spermatogenesis. Also involved in DNA damage response in somatic cells, by promoting degradation of histones following DNA double-strand breaks. The sequence is that of Proteasome activator complex subunit 4 (PSME4) from Bos taurus (Bovine).